The primary structure comprises 492 residues: Nuclear hormone receptor family member nhr-4 (492 aa).

Residues 47–122 (RLICDVCGDV…VGMNPDSVQN (76 aa)) constitute a DNA-binding region (nuclear receptor). 2 consecutive NR C4-type zinc fingers follow at residues 50–70 (CDVCGDVAFGKHYGINACNGC) and 86–110 (CRFGGDCPVVKEHRNVCRSCRLKKC). The segment at 121–143 (QNERDRNAKNGGMGGPMSSPTQS) is disordered. An NR LBD domain is found at 215–481 (MDFSIHSAVL…ELIQATHKTT (267 aa)).

The protein belongs to the nuclear hormone receptor family.

The protein localises to the nucleus. Orphan nuclear receptor. This chain is Nuclear hormone receptor family member nhr-4 (nhr-4), found in Caenorhabditis elegans.